A 469-amino-acid chain; its full sequence is C4b-binding protein (469 aa).

An N-terminal signal peptide occupies residues 1–56; it reads MCAKQQQTLLPTRAAHGRLHRNRDAVAWPFSTLCRVSGPTLFQMTFTAALWVAVFG. Sushi domains lie at 57–117, 118–178, 179–242, 243–301, 302–357, and 358–415; these read KCGP…SCAK, KHCR…ECVI, VKCG…TCEK, IICS…TCEF, DCDL…QCKA, and LCQK…RCEQ. 12 disulfide bridges follow: cysteine 58–cysteine 103, cysteine 88–cysteine 115, cysteine 120–cysteine 160, cysteine 146–cysteine 176, cysteine 181–cysteine 223, cysteine 209–cysteine 240, cysteine 245–cysteine 287, cysteine 273–cysteine 299, cysteine 303–cysteine 343, cysteine 329–cysteine 355, cysteine 359–cysteine 400, and cysteine 386–cysteine 413. N-linked (GlcNAc...) asparagine glycosylation occurs at asparagine 74. Asparagine 227, asparagine 275, and asparagine 292 each carry an N-linked (GlcNAc...) asparagine glycan. N-linked (GlcNAc...) asparagine glycosylation is found at asparagine 366 and asparagine 381. A glycan (N-linked (GlcNAc...) asparagine) is linked at asparagine 428.

Homoheptamer; not covalently linked. Mouse lacks the beta chain of C4BP.

The protein resides in the secreted. Its function is as follows. Controls the classical pathway of complement activation. It binds as a cofactor to C3b/C4b inactivator (C3bINA), which then hydrolyzes the complement fragment C4b. It also accelerates the degradation of the C4bC2a complex (C3 convertase) by dissociating the complement fragment C2a. Alpha chain binds C4b. It also interacts with serum amyloid P component. In Mus musculus (Mouse), this protein is C4b-binding protein (C4bpa).